We begin with the raw amino-acid sequence, 185 residues long: ATP synthase subunit b (185 aa).

The chain crosses the membrane as a helical span at residues 26 to 46 (LVLIGFAILLFIVIKFVVPMF).

It belongs to the ATPase B chain family. As to quaternary structure, F-type ATPases have 2 components, F(1) - the catalytic core - and F(0) - the membrane proton channel. F(1) has five subunits: alpha(3), beta(3), gamma(1), delta(1), epsilon(1). F(0) has three main subunits: a(1), b(2) and c(10-14). The alpha and beta chains form an alternating ring which encloses part of the gamma chain. F(1) is attached to F(0) by a central stalk formed by the gamma and epsilon chains, while a peripheral stalk is formed by the delta and b chains.

It localises to the cell membrane. In terms of biological role, f(1)F(0) ATP synthase produces ATP from ADP in the presence of a proton or sodium gradient. F-type ATPases consist of two structural domains, F(1) containing the extramembraneous catalytic core and F(0) containing the membrane proton channel, linked together by a central stalk and a peripheral stalk. During catalysis, ATP synthesis in the catalytic domain of F(1) is coupled via a rotary mechanism of the central stalk subunits to proton translocation. Component of the F(0) channel, it forms part of the peripheral stalk, linking F(1) to F(0). This is ATP synthase subunit b from Renibacterium salmoninarum (strain ATCC 33209 / DSM 20767 / JCM 11484 / NBRC 15589 / NCIMB 2235).